The following is a 581-amino-acid chain: Probable bifunctional SAT/APS kinase 2 (581 aa).

The segment at 1–200 is adenylsulfate kinase; it reads MSGFVVWFTG…AAGGARGLIA (200 aa). 10–17 serves as a coordination point for ATP; sequence GLSGAGKS. The Phosphoserine intermediate role is filled by serine 84. Residues 201–581 are sulfate adenylyltransferase; that stretch reads PHGGELVNRW…ILIESMRSSS (381 aa).

It in the N-terminal section; belongs to the APS kinase family. In the C-terminal section; belongs to the sulfate adenylyltransferase family.

It carries out the reaction sulfate + ATP + H(+) = adenosine 5'-phosphosulfate + diphosphate. It catalyses the reaction adenosine 5'-phosphosulfate + ATP = 3'-phosphoadenylyl sulfate + ADP + H(+). The protein operates within sulfur metabolism; hydrogen sulfide biosynthesis; sulfite from sulfate: step 1/3. It participates in sulfur metabolism; hydrogen sulfide biosynthesis; sulfite from sulfate: step 2/3. In Sorangium cellulosum (strain So ce56) (Polyangium cellulosum (strain So ce56)), this protein is Probable bifunctional SAT/APS kinase 2 (sat2/cysC2).